The primary structure comprises 116 residues: MDKKTSRLRRALRARKKIQELGVNRLVVHRTPRHIYAQVISPEAQVLAAASTVEKTVKELLKSTGNVDAAKAVGKIVAERAIEKGVAIVAFDRSGFKYHGRVAALADAAREAGLKF.

It belongs to the universal ribosomal protein uL18 family. As to quaternary structure, part of the 50S ribosomal subunit; part of the 5S rRNA/L5/L18/L25 subcomplex. Contacts the 5S and 23S rRNAs.

Its function is as follows. This is one of the proteins that bind and probably mediate the attachment of the 5S RNA into the large ribosomal subunit, where it forms part of the central protuberance. This chain is Large ribosomal subunit protein uL18, found in Shewanella denitrificans (strain OS217 / ATCC BAA-1090 / DSM 15013).